The primary structure comprises 154 residues: Protein X (154 aa).

Positions 68-117 (PCALRFTSARRMETTVNAHRNLPKVLHKRTLGLSAMSTTDLEAHFKDCVF) are mitochondrial targeting sequence.

Belongs to the orthohepadnavirus protein X family. As to quaternary structure, may form homodimer. May interact with host CEBPA, CFLAR, CREB1, DDB1, E4F1, HBXIP, HSPD1/HSP60, NFKBIA, POLR2E and SMAD4. Interacts with host SMC5-SMC6 complex and induces its degradation. Interacts with host TRPC4AP; leading to prevent ubiquitination of TRPC4AP. Interacts with host PLSCR1; this interaction promotes ubiquitination and degradation of HBx and impairs HBx-mediated cell proliferation. Post-translationally, a fraction may be phosphorylated in insect cells and HepG2 cells, a human hepatoblastoma cell line. Phosphorylated in vitro by host protein kinase C or mitogen-activated protein kinase. N-acetylated in insect cells.

Its subcellular location is the host cytoplasm. It localises to the host nucleus. The protein localises to the host mitochondrion. Functionally, multifunctional protein that plays a role in silencing host antiviral defenses and promoting viral transcription. Does not seem to be essential for HBV infection. May be directly involved in development of cirrhosis and liver cancer (hepatocellular carcinoma). Most of cytosolic activities involve modulation of cytosolic calcium. The effect on apoptosis is controversial depending on the cell types in which the studies have been conducted. May induce apoptosis by localizing in mitochondria and causing loss of mitochondrial membrane potential. May also modulate apoptosis by binding host CFLAR, a key regulator of the death-inducing signaling complex (DISC). Promotes viral transcription by using the host E3 ubiquitin ligase DDB1 to target the SMC5-SMC6 complex to proteasomal degradation. This host complex would otherwise bind to viral episomal DNA, and prevents its transcription. Moderately stimulates transcription of many different viral and cellular transcription elements. Promoters and enhancers stimulated by HBx contain DNA binding sites for NF-kappa-B, AP-1, AP-2, c-EBP, ATF/CREB, or the calcium-activated factor NF-AT. This Hepatitis B virus genotype B2 (isolate Indonesia/pIDW420/1988) (HBV-B) protein is Protein X.